Consider the following 92-residue polypeptide: Small ribosomal subunit protein uS19c (92 aa).

It belongs to the universal ribosomal protein uS19 family.

It localises to the plastid. Its subcellular location is the chloroplast. Its function is as follows. Protein S19 forms a complex with S13 that binds strongly to the 16S ribosomal RNA. In Oltmannsiellopsis viridis (Marine flagellate), this protein is Small ribosomal subunit protein uS19c.